The primary structure comprises 185 residues: Ribose 1,5-bisphosphate phosphokinase PhnN (185 aa).

Residue 10-17 (GPSGSGKD) coordinates ATP.

The protein belongs to the ribose 1,5-bisphosphokinase family.

It carries out the reaction alpha-D-ribose 1,5-bisphosphate + ATP = 5-phospho-alpha-D-ribose 1-diphosphate + ADP. It functions in the pathway metabolic intermediate biosynthesis; 5-phospho-alpha-D-ribose 1-diphosphate biosynthesis; 5-phospho-alpha-D-ribose 1-diphosphate from D-ribose 5-phosphate (route II): step 3/3. In terms of biological role, catalyzes the phosphorylation of ribose 1,5-bisphosphate to 5-phospho-D-ribosyl alpha-1-diphosphate (PRPP). In Shigella dysenteriae serotype 1 (strain Sd197), this protein is Ribose 1,5-bisphosphate phosphokinase PhnN.